The following is a 198-amino-acid chain: Segregation and condensation protein B (198 aa).

Belongs to the ScpB family. In terms of assembly, homodimer. Homodimerization may be required to stabilize the binding of ScpA to the Smc head domains. Component of a cohesin-like complex composed of ScpA, ScpB and the Smc homodimer, in which ScpA and ScpB bind to the head domain of Smc. The presence of the three proteins is required for the association of the complex with DNA.

Its subcellular location is the cytoplasm. In terms of biological role, participates in chromosomal partition during cell division. May act via the formation of a condensin-like complex containing Smc and ScpA that pull DNA away from mid-cell into both cell halves. In Streptococcus mutans serotype c (strain ATCC 700610 / UA159), this protein is Segregation and condensation protein B.